A 446-amino-acid chain; its full sequence is NAD kinase (446 aa).

Residues serine 46, serine 48, serine 50, serine 55, and serine 64 each carry the phosphoserine modification.

Belongs to the NAD kinase family. The cofactor is a divalent metal cation. As to expression, widely expressed but not detected in skeletal muscle.

The enzyme catalyses NAD(+) + ATP = ADP + NADP(+) + H(+). The sequence is that of NAD kinase (NADK) from Homo sapiens (Human).